Here is a 517-residue protein sequence, read N- to C-terminus: Mucin-like protein 3 (517 aa).

An N-terminal signal peptide occupies residues 1-29 (MAQPVHSLCSAFGLQCCLLFLLASWGAGA). Over 30–448 (TTFQEYQKTG…GENDSFPAWA (419 aa)) the chain is Extracellular. The disordered stretch occupies residues 67–341 (SGQRPPELPK…PTENLGNTTL (275 aa)). Residues 83–93 (QKRHCNTTRHS) are compositionally biased toward basic residues. N-linked (GlcNAc...) asparagine glycosylation occurs at N88. A compositionally biased stretch (basic and acidic residues) spans 105–116 (TIDHKSSTDNHE). N-linked (GlcNAc...) asparagine glycosylation is present at N124. A compositionally biased stretch (polar residues) spans 169 to 179 (RKSTTGKSTVT). Positions 180–190 (RKSDKTGRPLE) are enriched in basic and acidic residues. Residues 194–213 (STLDKTSTSSHKTTTSFHNS) show a composition bias toward low complexity. Composition is skewed to polar residues over residues 214–225 (GNSQTKQKSTSF), 232–243 (ASKTTYKTTGTP), and 263–283 (TKTTKNIQETISANELTQSLA). Residues 305-317 (TENRERTANENKK) are compositionally biased toward basic and acidic residues. N338 carries N-linked (GlcNAc...) asparagine glycosylation. Residues 449-469 (IVIVVLVAVILLLVFLGLIFL) traverse the membrane as a helical segment. The Cytoplasmic portion of the chain corresponds to 470–517 (VSYMMRTRRTLTQNTQYNDAEDEGGPNSYPVYLMEQQNLGMGQIPSPR).

As to expression, detected in lung, esophagus, stomach, rectum, skin, cervix, testis, kidney, uterus and small intestine. Expressed in pancreas (at protein level).

The protein resides in the cell membrane. Its subcellular location is the cytoplasm. May modulate NF-kappaB signaling and play a role in cell growth. This is Mucin-like protein 3 from Homo sapiens (Human).